The primary structure comprises 703 residues: MKKIIYQQDEKDCGVACIAMILKHYGTEITIQRLRELSGTDLDGTSAFGIKKTFEKLGFDAPAFKAGDETWQEKDIPLPLIAHIISEQKYQHYVVVYKVKGDEIWIADPAKGKIRKTISEFSKEWTGVLLFPKPKAEYKPSIERVDSLSTFFPILIKQKSLFITIFGIISSYYFQGLLDNIIPNQARSTLNILSIGLIFVYLFRVLFEYSRSYLLLLIGQRMSMSIMLGYFKHVLSLPLSFFATRKSGEIISRFLDANKIIDALASATLSLILDIGMVILVGTTLAIQSTQLFLLTLAFLPFYILVVYVFIRSYDKANTEEMSAGAEVNSSIIESLKGIETIKSYNGENHVYDRVDSEFVTLMKKSFKSVTLDNVQQSLKMVIELISSVLILWLGSSYVIDGKISLGQLITYNALLVFFTEPLQNIINLQVKMQKARVANKRLNEIMSISPEQRNTNINISKNIFNKDIKLDKVSFSYNMKLPVLRDVSLEIYSKSKVALVGVSGSGKSTLAKLLVKFYDPSEGNITYGDINCQDIENHKLRNHVTYVPQESFFFNGTIIDNLTFGLSHQPEFEKIFRACKAACLVDFINQQPLRFDSVLEEGGNNLSGGQKQRLAIARAILNDSEIIIFDEATSGLDTLLEKEILEYLIKLQDKTIIFIAHHLSIAKACDEIIVLDQGILVGRGTHEELSEKEGVYRRLLNA.

The 126-residue stretch at 7 to 132 (QQDEKDCGVA…KEWTGVLLFP (126 aa)) folds into the Peptidase C39 domain. Cys-13 is a catalytic residue. The region spanning 153-435 (PILIKQKSLF…IINLQVKMQK (283 aa)) is the ABC transmembrane type-1 domain. A run of 7 helical transmembrane segments spans residues 162-182 (FITI…DNII), 189-209 (TLNI…LFEY), 224-244 (MSIM…FFAT), 267-287 (ATLS…TLAI), 291-311 (QLFL…YVFI), 381-401 (MVIE…YVID), and 409-429 (LITY…IINL). One can recognise an ABC transporter domain in the interval 469-703 (IKLDKVSFSY…EGVYRRLLNA (235 aa)). Position 502–509 (502–509 (GVSGSGKS)) interacts with ATP.

It belongs to the ABC transporter superfamily. LagD family. As to quaternary structure, homodimer.

The protein resides in the cell membrane. In terms of biological role, lagD (TC 3.A.1) is involved in processing the signal peptide and probably also in export of the bacteriocin lactococcin G. This Lactococcus lactis subsp. lactis (Streptococcus lactis) protein is Lactococcin-G-processing and transport ATP-binding protein LagD (lagD).